The following is a 101-amino-acid chain: Small ribosomal subunit protein uS14 (101 aa).

The segment covering 1-10 has biased composition (basic and acidic residues); it reads MAKKSSIEKN. The segment at 1 to 23 is disordered; that stretch reads MAKKSSIEKNNRRRRMNRNAAAK. Over residues 11–23 the composition is skewed to basic residues; the sequence is NRRRRMNRNAAAK.

Belongs to the universal ribosomal protein uS14 family. In terms of assembly, part of the 30S ribosomal subunit. Contacts proteins S3 and S10.

In terms of biological role, binds 16S rRNA, required for the assembly of 30S particles and may also be responsible for determining the conformation of the 16S rRNA at the A site. The polypeptide is Small ribosomal subunit protein uS14 (Nitrobacter winogradskyi (strain ATCC 25391 / DSM 10237 / CIP 104748 / NCIMB 11846 / Nb-255)).